A 413-amino-acid chain; its full sequence is Cardiolipin synthase B (413 aa).

PLD phosphodiesterase domains are found at residues 108–135 and 285–312; these read VFRR…SAEH and RRRP…DPLS. Active-site residues include His113, Lys115, Asp120, His290, Lys292, and Asp297. Residues 390-413 form a disordered region; that stretch reads VDPPAQPTMETQDRVETENTGVKP.

It belongs to the phospholipase D family. Cardiolipin synthase subfamily. ClsB sub-subfamily.

The protein resides in the cell membrane. The catalysed reaction is 2 a 1,2-diacyl-sn-glycero-3-phospho-(1'-sn-glycerol) = a cardiolipin + glycerol. Catalyzes the phosphatidyl group transfer from one phosphatidylglycerol molecule to another to form cardiolipin (CL) (diphosphatidylglycerol) and glycerol. The protein is Cardiolipin synthase B of Escherichia coli O157:H7.